The primary structure comprises 173 residues: Glutamyl-tRNA(Gln) amidotransferase subunit C, mitochondrial (173 aa).

This sequence belongs to the GatC family. In terms of assembly, subunit of the heterotrimeric GatCAB amidotransferase (AdT) complex, composed of A, B and C subunits.

Its subcellular location is the mitochondrion. The catalysed reaction is L-glutamyl-tRNA(Gln) + L-glutamine + ATP + H2O = L-glutaminyl-tRNA(Gln) + L-glutamate + ADP + phosphate + H(+). Its function is as follows. Allows the formation of correctly charged Gln-tRNA(Gln) through the transamidation of misacylated Glu-tRNA(Gln) in the mitochondria. The reaction takes place in the presence of glutamine and ATP through an activated gamma-phospho-Glu-tRNA(Gln). The chain is Glutamyl-tRNA(Gln) amidotransferase subunit C, mitochondrial from Drosophila persimilis (Fruit fly).